The sequence spans 318 residues: Na(+)-translocating ferredoxin:NAD(+) oxidoreductase complex subunit D (318 aa).

3 consecutive transmembrane segments (helical) span residues 35-55 (LAVA…ICVI), 77-99 (WSAV…WWIG), and 114-134 (FGGL…FLLA). At threonine 156 the chain carries FMN phosphoryl threonine. Helical transmembrane passes span 182 to 202 (VYGC…LYLI), 206 to 226 (IISW…ALLV), and 261 to 281 (IIYA…GGYP).

This sequence belongs to the NqrB/RnfD family. The complex is composed of six subunits: RnfA, RnfB, RnfC, RnfD, RnfE and RnfG. Requires FMN as cofactor.

The protein localises to the cell membrane. The enzyme catalyses 2 reduced [2Fe-2S]-[ferredoxin] + Na(+)(in) + NAD(+) + H(+) = 2 oxidized [2Fe-2S]-[ferredoxin] + Na(+)(out) + NADH. Its function is as follows. Part of a membrane-bound complex that couples electron transfer with translocation of ions across the membrane. Couples electron transfer from reduced ferredoxin to NAD(+) with electrogenic movement of Na(+) out of the cell. Involved in caffeate respiration. This is Na(+)-translocating ferredoxin:NAD(+) oxidoreductase complex subunit D from Acetobacterium woodii (strain ATCC 29683 / DSM 1030 / JCM 2381 / KCTC 1655 / WB1).